The sequence spans 300 residues: Ribosomal protein L11 methyltransferase (300 aa).

Positions 148, 171, 193, and 235 each coordinate S-adenosyl-L-methionine.

Belongs to the methyltransferase superfamily. PrmA family.

It is found in the cytoplasm. It carries out the reaction L-lysyl-[protein] + 3 S-adenosyl-L-methionine = N(6),N(6),N(6)-trimethyl-L-lysyl-[protein] + 3 S-adenosyl-L-homocysteine + 3 H(+). Its function is as follows. Methylates ribosomal protein L11. This Desulfotalea psychrophila (strain LSv54 / DSM 12343) protein is Ribosomal protein L11 methyltransferase.